A 95-amino-acid chain; its full sequence is Small ribosomal subunit protein bS6 (95 aa).

Belongs to the bacterial ribosomal protein bS6 family.

Binds together with bS18 to 16S ribosomal RNA. In Aster yellows witches'-broom phytoplasma (strain AYWB), this protein is Small ribosomal subunit protein bS6.